The primary structure comprises 292 residues: Type II methyltransferase M.SmaI (292 aa).

The interval 110-130 (WRDKDDKNKGRAMSYRPPTPE) is disordered.

The protein belongs to the N(4)/N(6)-methyltransferase family. N(4) subfamily.

The catalysed reaction is a 2'-deoxycytidine in DNA + S-adenosyl-L-methionine = an N(4)-methyl-2'-deoxycytidine in DNA + S-adenosyl-L-homocysteine + H(+). Functionally, a beta subtype methylase thatnrecognizes the double-stranded sequence 5'-CCCGGG-3', methylates C-2 on both strands, and protects the DNA from cleavage by the SmaI endonuclease. The polypeptide is Type II methyltransferase M.SmaI (smaIM) (Serratia marcescens).